The primary structure comprises 341 residues: Anthranilate phosphoribosyltransferase (341 aa).

Residues Gly-79, 82 to 83 (GD), Thr-87, 89 to 92 (NIST), 107 to 115 (KHGNRSISS), and Ser-119 contribute to the 5-phospho-alpha-D-ribose 1-diphosphate site. Gly-79 is an anthranilate binding site. Ser-91 is a Mg(2+) binding site. Anthranilate is bound at residue Asn-110. Position 164 (Arg-164) interacts with anthranilate. The Mg(2+) site is built by Asp-222 and Glu-223.

It belongs to the anthranilate phosphoribosyltransferase family. As to quaternary structure, homodimer. Mg(2+) is required as a cofactor.

It catalyses the reaction N-(5-phospho-beta-D-ribosyl)anthranilate + diphosphate = 5-phospho-alpha-D-ribose 1-diphosphate + anthranilate. The protein operates within amino-acid biosynthesis; L-tryptophan biosynthesis; L-tryptophan from chorismate: step 2/5. In terms of biological role, catalyzes the transfer of the phosphoribosyl group of 5-phosphorylribose-1-pyrophosphate (PRPP) to anthranilate to yield N-(5'-phosphoribosyl)-anthranilate (PRA). In Blochmanniella pennsylvanica (strain BPEN), this protein is Anthranilate phosphoribosyltransferase.